The primary structure comprises 187 residues: Ribosome-recycling factor (187 aa).

The protein belongs to the RRF family.

It localises to the cytoplasm. Responsible for the release of ribosomes from messenger RNA at the termination of protein biosynthesis. May increase the efficiency of translation by recycling ribosomes from one round of translation to another. This is Ribosome-recycling factor from Flavobacterium psychrophilum (strain ATCC 49511 / DSM 21280 / CIP 103535 / JIP02/86).